Reading from the N-terminus, the 185-residue chain is Shikimate kinase (185 aa).

12-17 (GSGKTT) serves as a coordination point for ATP. Thr-16 provides a ligand contact to Mg(2+). Substrate-binding residues include Asp-34, Arg-58, and Gly-79. Arg-116 provides a ligand contact to ATP. Arg-135 provides a ligand contact to substrate.

It belongs to the shikimate kinase family. As to quaternary structure, monomer. Mg(2+) serves as cofactor.

The protein localises to the cytoplasm. The catalysed reaction is shikimate + ATP = 3-phosphoshikimate + ADP + H(+). It participates in metabolic intermediate biosynthesis; chorismate biosynthesis; chorismate from D-erythrose 4-phosphate and phosphoenolpyruvate: step 5/7. Catalyzes the specific phosphorylation of the 3-hydroxyl group of shikimic acid using ATP as a cosubstrate. In Corynebacterium jeikeium (strain K411), this protein is Shikimate kinase.